The sequence spans 498 residues: ATP synthase subunit beta, chloroplastic (498 aa).

Residue Gly172–Thr179 participates in ATP binding.

It belongs to the ATPase alpha/beta chains family. F-type ATPases have 2 components, CF(1) - the catalytic core - and CF(0) - the membrane proton channel. CF(1) has five subunits: alpha(3), beta(3), gamma(1), delta(1), epsilon(1). CF(0) has four main subunits: a(1), b(1), b'(1) and c(9-12).

It localises to the plastid. Its subcellular location is the chloroplast thylakoid membrane. It carries out the reaction ATP + H2O + 4 H(+)(in) = ADP + phosphate + 5 H(+)(out). In terms of biological role, produces ATP from ADP in the presence of a proton gradient across the membrane. The catalytic sites are hosted primarily by the beta subunits. This chain is ATP synthase subunit beta, chloroplastic, found in Nicotiana sp. (Tobacco).